The primary structure comprises 1882 residues: RNA2 polyprotein (1882 aa).

2 tandem repeats follow at residues 554–606 (SWSS…LPSF) and 607–659 (SWSS…LPSF). Positions 554–698 (SWSSPLPLFA…VSDEFMDVLP (145 aa)) are 2.5 X tandem repeats, Pro-rich. The 3; truncated and approximate repeat unit spans residues 660 to 698 (SWSSPLPLFASFKVNRGACFLQVLPARKVVSDEFMDVLP). Polar residues-rich tracts occupy residues 1289–1303 (SSLF…QQGT) and 1838–1847 (PSATLGTNNP). Disordered regions lie at residues 1289–1320 (SSLF…SSVQ) and 1838–1863 (PSAT…PGGQ).

It belongs to the nepoviruses RNA2 polyprotein family. Post-translationally, specific enzymatic cleavages in vivo by the P1 encoded 3C-like protease yield mature proteins.

Its subcellular location is the host cell junction. It is found in the host plasmodesma. The protein resides in the virion. Functionally, protein 2A: implicated in RNA2 replication. Could also be required for nematode transmission of the virus. In terms of biological role, transports viral genome to neighboring plant cells directly through plasmosdesmata, without any budding. The movement protein allows efficient cell to cell propagation, by bypassing the host cell wall barrier. Acts by forming a tubular structure at the host plasmodesmata, enlarging it enough to allow free passage of virion capsids. This chain is RNA2 polyprotein, found in Tomato ringspot virus (isolate raspberry) (ToRSV).